Here is a 269-residue protein sequence, read N- to C-terminus: Diaminopimelate epimerase (269 aa).

Asparagine 20 and asparagine 63 together coordinate substrate. Cysteine 72 acts as the Proton donor in catalysis. Substrate contacts are provided by residues 73-74 (GN), asparagine 179, and 197-198 (ER). Catalysis depends on cysteine 207, which acts as the Proton acceptor. 208-209 (GT) lines the substrate pocket.

Belongs to the diaminopimelate epimerase family. In terms of assembly, homodimer.

It localises to the cytoplasm. The catalysed reaction is (2S,6S)-2,6-diaminopimelate = meso-2,6-diaminopimelate. It participates in amino-acid biosynthesis; L-lysine biosynthesis via DAP pathway; DL-2,6-diaminopimelate from LL-2,6-diaminopimelate: step 1/1. Functionally, catalyzes the stereoinversion of LL-2,6-diaminopimelate (L,L-DAP) to meso-diaminopimelate (meso-DAP), a precursor of L-lysine and an essential component of the bacterial peptidoglycan. This chain is Diaminopimelate epimerase, found in Chlamydia muridarum (strain MoPn / Nigg).